A 329-amino-acid chain; its full sequence is Gibberellin 2-beta-dioxygenase 1 (329 aa).

A Fe2OG dioxygenase domain is found at 165–273 (NTDSILRLNH…RVSMIYFAGP (109 aa)). Fe cation-binding residues include His197, Asp199, and His254. The active site involves Arg264. Arg264 provides a ligand contact to 2-oxoglutarate.

The protein belongs to the iron/ascorbate-dependent oxidoreductase family. GA2OX subfamily. Fe(2+) serves as cofactor. In terms of tissue distribution, preferentially expressed in flowers, siliques, and upper stems. Not expressed in the apex.

The catalysed reaction is gibberellin A1 + 2-oxoglutarate + O2 = gibberellin A8 + succinate + CO2. It participates in plant hormone biosynthesis; gibberellin biosynthesis. In terms of biological role, catalyzes the 2-beta-hydroxylation of several biologically active gibberellins, leading to the homeostatic regulation of their endogenous level. Catabolism of gibberellins (GAs) plays a central role in plant development. Converts GA9/GA20 to GA51/GA29 and GA4/GA1 to GA34/GA8. In Arabidopsis thaliana (Mouse-ear cress), this protein is Gibberellin 2-beta-dioxygenase 1 (GA2OX1).